A 144-amino-acid chain; its full sequence is Cytochrome c oxidase subunit 4 isoform 1, mitochondrial (144 aa).

The Mitochondrial matrix portion of the chain corresponds to 1 to 73 (SVVKSEDFSL…SFAEMNRGSN (73 aa)). Residue Lys4 is modified to N6-acetyllysine; alternate. Position 4 is an N6-succinyllysine; alternate (Lys4). Lys28 is modified (N6-acetyllysine). Phosphoserine is present on residues Ser31 and Ser33. An N6-acetyllysine; alternate modification is found at Lys35. N6-succinyllysine; alternate is present on Lys35. At Lys42 the chain carries N6-acetyllysine. Residues 74–99 (EWKTVVGGAMFFIGFTALVIMWQKHY) form a helical membrane-spanning segment. Residues 100-144 (VYGPLPQSFDKEWVAKQTKRMLDMKVNPIQGLASKWDYEKNEWKK) lie on the Mitochondrial intermembrane side of the membrane.

Belongs to the cytochrome c oxidase IV family. In terms of assembly, component of the cytochrome c oxidase (complex IV, CIV), a multisubunit enzyme composed of 14 subunits. The complex is composed of a catalytic core of 3 subunits MT-CO1, MT-CO2 and MT-CO3, encoded in the mitochondrial DNA, and 11 supernumerary subunits COX4I, COX5A, COX5B, COX6A, COX6B, COX6C, COX7A, COX7B, COX7C, COX8 and NDUFA4, which are encoded in the nuclear genome. The complex exists as a monomer or a dimer and forms supercomplexes (SCs) in the inner mitochondrial membrane with NADH-ubiquinone oxidoreductase (complex I, CI) and ubiquinol-cytochrome c oxidoreductase (cytochrome b-c1 complex, complex III, CIII), resulting in different assemblies (supercomplex SCI(1)III(2)IV(1) and megacomplex MCI(2)III(2)IV(2)). Interacts with PHB2; the interaction decreases in absence of SPHK2. Interacts with AFG1L. Interacts with ABCB7; this interaction allows the regulation of cellular iron homeostasis and cellular reactive oxygen species (ROS) levels in cardiomyocytes. Interacts with FLVCR2; this interaction occurs in the absence of heme and is disrupted upon heme binding. Interacts with IRGC.

The protein resides in the mitochondrion inner membrane. It functions in the pathway energy metabolism; oxidative phosphorylation. Functionally, component of the cytochrome c oxidase, the last enzyme in the mitochondrial electron transport chain which drives oxidative phosphorylation. The respiratory chain contains 3 multisubunit complexes succinate dehydrogenase (complex II, CII), ubiquinol-cytochrome c oxidoreductase (cytochrome b-c1 complex, complex III, CIII) and cytochrome c oxidase (complex IV, CIV), that cooperate to transfer electrons derived from NADH and succinate to molecular oxygen, creating an electrochemical gradient over the inner membrane that drives transmembrane transport and the ATP synthase. Cytochrome c oxidase is the component of the respiratory chain that catalyzes the reduction of oxygen to water. Electrons originating from reduced cytochrome c in the intermembrane space (IMS) are transferred via the dinuclear copper A center (CU(A)) of subunit 2 and heme A of subunit 1 to the active site in subunit 1, a binuclear center (BNC) formed by heme A3 and copper B (CU(B)). The BNC reduces molecular oxygen to 2 water molecules using 4 electrons from cytochrome c in the IMS and 4 protons from the mitochondrial matrix. This is Cytochrome c oxidase subunit 4 isoform 1, mitochondrial (COX4I1) from Gorilla gorilla gorilla (Western lowland gorilla).